Consider the following 317-residue polypeptide: Phospho-N-acetylmuramoyl-pentapeptide-transferase (317 aa).

9 helical membrane passes run 6-26, 52-72, 78-98, 114-134, 145-165, 171-191, 194-214, 223-244, and 297-317; these read IVMAIVISFIVASILGPIIIP, PTIGGLIFIFATIITMFIMVG, AMIALYSFVGFGFVGFLDDLL, MILLLIVSGFLTWYAYKYIGT, INFGLFYIPFVMFYFAGVTNA, GLDGLATSVTVLVTTFLGIIS, LGHISLAIFCVALAGALLAFL, VFMGDTGSLALGGAVAMVALIL, and KIVSVFSIITVVFCFIAFASL.

This sequence belongs to the glycosyltransferase 4 family. MraY subfamily. It depends on Mg(2+) as a cofactor.

It localises to the cell membrane. The enzyme catalyses UDP-N-acetyl-alpha-D-muramoyl-L-alanyl-gamma-D-glutamyl-meso-2,6-diaminopimeloyl-D-alanyl-D-alanine + di-trans,octa-cis-undecaprenyl phosphate = di-trans,octa-cis-undecaprenyl diphospho-N-acetyl-alpha-D-muramoyl-L-alanyl-D-glutamyl-meso-2,6-diaminopimeloyl-D-alanyl-D-alanine + UMP. The protein operates within cell wall biogenesis; peptidoglycan biosynthesis. Catalyzes the initial step of the lipid cycle reactions in the biosynthesis of the cell wall peptidoglycan: transfers peptidoglycan precursor phospho-MurNAc-pentapeptide from UDP-MurNAc-pentapeptide onto the lipid carrier undecaprenyl phosphate, yielding undecaprenyl-pyrophosphoryl-MurNAc-pentapeptide, known as lipid I. This chain is Phospho-N-acetylmuramoyl-pentapeptide-transferase, found in Clostridium perfringens (strain 13 / Type A).